The primary structure comprises 306 residues: tRNA dimethylallyltransferase (306 aa).

Residue 11 to 18 (GPTAVGKS) participates in ATP binding. 13–18 (TAVGKS) contacts substrate. Positions 35-38 (DSIQ) are interaction with substrate tRNA.

Belongs to the IPP transferase family. In terms of assembly, monomer. The cofactor is Mg(2+).

It carries out the reaction adenosine(37) in tRNA + dimethylallyl diphosphate = N(6)-dimethylallyladenosine(37) in tRNA + diphosphate. Its function is as follows. Catalyzes the transfer of a dimethylallyl group onto the adenine at position 37 in tRNAs that read codons beginning with uridine, leading to the formation of N6-(dimethylallyl)adenosine (i(6)A). The protein is tRNA dimethylallyltransferase of Borreliella burgdorferi (strain ATCC 35210 / DSM 4680 / CIP 102532 / B31) (Borrelia burgdorferi).